The chain runs to 145 residues: Ribonuclease P protein component (145 aa).

Over residues 120 to 130 the composition is skewed to low complexity; it reads LPAAPGTMPPA. The interval 120 to 145 is disordered; sequence LPAAPGTMPPARTMHPSSLSPTEPDL. Polar residues predominate over residues 134-145; that stretch reads HPSSLSPTEPDL.

This sequence belongs to the RnpA family. Consists of a catalytic RNA component (M1 or rnpB) and a protein subunit.

The catalysed reaction is Endonucleolytic cleavage of RNA, removing 5'-extranucleotides from tRNA precursor.. Functionally, RNaseP catalyzes the removal of the 5'-leader sequence from pre-tRNA to produce the mature 5'-terminus. It can also cleave other RNA substrates such as 4.5S RNA. The protein component plays an auxiliary but essential role in vivo by binding to the 5'-leader sequence and broadening the substrate specificity of the ribozyme. This is Ribonuclease P protein component from Xanthomonas oryzae pv. oryzae (strain MAFF 311018).